We begin with the raw amino-acid sequence, 80 residues long: Large ribosomal subunit protein uL24 (80 aa).

It belongs to the universal ribosomal protein uL24 family. In terms of assembly, part of the 50S ribosomal subunit.

Functionally, one of two assembly initiator proteins, it binds directly to the 5'-end of the 23S rRNA, where it nucleates assembly of the 50S subunit. In terms of biological role, one of the proteins that surrounds the polypeptide exit tunnel on the outside of the subunit. This Chlorobium phaeovibrioides (strain DSM 265 / 1930) (Prosthecochloris vibrioformis (strain DSM 265)) protein is Large ribosomal subunit protein uL24.